Reading from the N-terminus, the 260-residue chain is Proteasome subunit alpha (260 aa).

This sequence belongs to the peptidase T1A family. In terms of assembly, the 20S proteasome core is composed of 14 alpha and 14 beta subunits that assemble into four stacked heptameric rings, resulting in a barrel-shaped structure. The two inner rings, each composed of seven catalytic beta subunits, are sandwiched by two outer rings, each composed of seven alpha subunits. The catalytic chamber with the active sites is on the inside of the barrel. Has a gated structure, the ends of the cylinder being occluded by the N-termini of the alpha-subunits. Is capped at one or both ends by the proteasome regulatory ATPase, PAN.

The protein resides in the cytoplasm. With respect to regulation, the formation of the proteasomal ATPase PAN-20S proteasome complex, via the docking of the C-termini of PAN into the intersubunit pockets in the alpha-rings, triggers opening of the gate for substrate entry. Interconversion between the open-gate and close-gate conformations leads to a dynamic regulation of the 20S proteasome proteolysis activity. Functionally, component of the proteasome core, a large protease complex with broad specificity involved in protein degradation. The chain is Proteasome subunit alpha from Thermococcus sp. (strain JCM 11816 / KS-1).